The primary structure comprises 397 residues: Succinate--CoA ligase [ADP-forming] subunit beta (397 aa).

In terms of domain architecture, ATP-grasp spans 9-254 (KALLRSYGAP…ETEEDPKELA (246 aa)). ATP-binding positions include Lys46, 53-55 (GRG), Glu109, Ser112, and Glu117. Residues Asn209 and Asp223 each coordinate Mg(2+). Substrate contacts are provided by residues Asn274 and 331–333 (GIM).

The protein belongs to the succinate/malate CoA ligase beta subunit family. As to quaternary structure, heterotetramer of two alpha and two beta subunits. Mg(2+) serves as cofactor.

The enzyme catalyses succinate + ATP + CoA = succinyl-CoA + ADP + phosphate. It catalyses the reaction GTP + succinate + CoA = succinyl-CoA + GDP + phosphate. It functions in the pathway carbohydrate metabolism; tricarboxylic acid cycle; succinate from succinyl-CoA (ligase route): step 1/1. In terms of biological role, succinyl-CoA synthetase functions in the citric acid cycle (TCA), coupling the hydrolysis of succinyl-CoA to the synthesis of either ATP or GTP and thus represents the only step of substrate-level phosphorylation in the TCA. The beta subunit provides nucleotide specificity of the enzyme and binds the substrate succinate, while the binding sites for coenzyme A and phosphate are found in the alpha subunit. This chain is Succinate--CoA ligase [ADP-forming] subunit beta, found in Cereibacter sphaeroides (strain ATCC 17025 / ATH 2.4.3) (Rhodobacter sphaeroides).